Reading from the N-terminus, the 542-residue chain is MACNDVDKSSFDDVCCDSGHSSCAAAMEKERESFLSPTENPSTISVSSSMPPDQQGYDVEFDPPLESKYECPICLMGLRSAVQTPCGHRFCDSCIRKSIRDTGQKCPVDNEVLLEEQLFPDNFAKREILSLTVKCSNFGCSEKMELRQLEKHLSQCRFATAPCPQCQESVPISHLDEHKSQHCLQRIMTCPDCAGSFVYAVKQNHEQFCPFANTVCEYCEMELIRDQLALHCDTDCLKAPVACTFSTFGCREKMTRNELAQHMQEFTQMHMRYMAEFLRSQTLNNCTMPSAAAHLSSDDRGASARSPDSCQCKQELLNLRETVLELEGRLVRQDQQIRELCIHNDTQKNQVTELRRKLVSLEESTRELEAQQYQGIYVWRVENFSHHLRNQEAGQPIVLHSPPFYTGRPGYKLCLRLHLQTPSAPRCSNFISLFVHTMQGEFDSQLSWPLQGTIRLAVLDQVEGQHHIEVMETKPDLQAFQRPTVMRNPKGFGYVTFLHLQALRQRGFVKEDVLLVRCEVTPRFDASLRREGVQPRGPEPSI.

The disordered stretch occupies residues 32–54 (ESFLSPTENPSTISVSSSMPPDQ). Polar residues predominate over residues 35-52 (LSPTENPSTISVSSSMPP). An RING-type; degenerate zinc finger spans residues 71-110 (CPICLMGLRSAVQTPCGHRFCDSCIRKSIRDTGQKCPVDN). 2 consecutive TRAF-type zinc fingers follow at residues 151–203 (KHLS…AVKQ) and 204–260 (NHEQ…NELA). The stretch at 311-373 (QCKQELLNLR…STRELEAQQY (63 aa)) forms a coiled coil. The MATH domain maps to 374–520 (QGIYVWRVEN…EDVLLVRCEV (147 aa)). 489–496 (PKGFGYVT) lines the substrate pocket.

Belongs to the TNF receptor-associated factor family. A subfamily. In terms of assembly, homotrimer. Homooligomer.

Its subcellular location is the cytoplasm. The protein localises to the cell cortex. It is found in the nucleus. It localises to the lipid droplet. It catalyses the reaction S-ubiquitinyl-[E2 ubiquitin-conjugating enzyme]-L-cysteine + [acceptor protein]-L-lysine = [E2 ubiquitin-conjugating enzyme]-L-cysteine + N(6)-ubiquitinyl-[acceptor protein]-L-lysine.. It functions in the pathway protein modification; protein ubiquitination. In terms of biological role, E3 ubiquitin ligase that, together with UBE2N and UBE2V1, mediates the synthesis of 'Lys-63'-linked-polyubiquitin chains conjugated to proteins, such as IKBKG, IRAK1, AKT1 and AKT2. Also mediates ubiquitination of free/unanchored polyubiquitin chain that leads to MAP3K7 activation. This chain is TNF receptor-associated factor 6 (traf6), found in Danio rerio (Zebrafish).